The chain runs to 212 residues: Leucine efflux protein (212 aa).

Helical transmembrane passes span 5–25 (FGVL…LVPG), 49–69 (GVFI…ATLI), 81–101 (YLGA…VLTQ), 122–142 (TLSL…VQFI), 153–173 (FFIL…FLIL), and 188–208 (LAKL…ARLA).

It belongs to the Rht family.

It is found in the cell inner membrane. It carries out the reaction L-leucine(in) + H(+)(out) = L-leucine(out) + H(+)(in). Exporter of leucine. This chain is Leucine efflux protein (leuE), found in Klebsiella pneumoniae subsp. pneumoniae (strain ATCC 700721 / MGH 78578).